A 267-amino-acid chain; its full sequence is MNDTQHTPPFIAVVPARLASTRLPNKPLADIGGKPMVVRVAERAVESGAQQVLIATDAQAVFDVARAHGIDAMMTRADHPSGTDRLAEVAAHYGWRDDMIVVNVQGDEPLIDPALVRGVASHLAATDGCAIATAAHPIHDPADVFNPNVVKVVPDARGVALYFSRAPIPWARDAYQPHWPNIAQMPAPPAPAAVYRHIGLYAYRAKFLRTYPSLSISPIEQAEALEQLRAMWHGERIAVLVTNDAPLPGVDTPDDLARVQAFFGSSA.

The protein belongs to the KdsB family.

It localises to the cytoplasm. The catalysed reaction is 3-deoxy-alpha-D-manno-oct-2-ulosonate + CTP = CMP-3-deoxy-beta-D-manno-octulosonate + diphosphate. Its pathway is nucleotide-sugar biosynthesis; CMP-3-deoxy-D-manno-octulosonate biosynthesis; CMP-3-deoxy-D-manno-octulosonate from 3-deoxy-D-manno-octulosonate and CTP: step 1/1. It participates in bacterial outer membrane biogenesis; lipopolysaccharide biosynthesis. Activates KDO (a required 8-carbon sugar) for incorporation into bacterial lipopolysaccharide in Gram-negative bacteria. This is 3-deoxy-manno-octulosonate cytidylyltransferase from Paraburkholderia phymatum (strain DSM 17167 / CIP 108236 / LMG 21445 / STM815) (Burkholderia phymatum).